We begin with the raw amino-acid sequence, 100 residues long: Small ribosomal subunit protein uS14c (100 aa).

This sequence belongs to the universal ribosomal protein uS14 family. In terms of assembly, part of the 30S ribosomal subunit.

It localises to the plastid. Binds 16S rRNA, required for the assembly of 30S particles. The polypeptide is Small ribosomal subunit protein uS14c (Cuscuta exaltata (Tall dodder)).